The chain runs to 246 residues: DNA polymerase sliding clamp (246 aa).

Belongs to the PCNA family. As to quaternary structure, homotrimer. The subunits circularize to form a toroid; DNA passes through its center. Replication factor C (RFC) is required to load the toroid on the DNA.

In terms of biological role, sliding clamp subunit that acts as a moving platform for DNA processing. Responsible for tethering the catalytic subunit of DNA polymerase and other proteins to DNA during high-speed replication. The polypeptide is DNA polymerase sliding clamp (Thermoplasma volcanium (strain ATCC 51530 / DSM 4299 / JCM 9571 / NBRC 15438 / GSS1)).